Reading from the N-terminus, the 432-residue chain is Ribulose bisphosphate carboxylase-like protein 2 (432 aa).

Mg(2+)-binding residues include lysine 198, aspartate 200, and glutamate 201. The residue at position 198 (lysine 198) is an N6-carboxylysine.

It belongs to the RuBisCO large chain family. Type IV subfamily. In terms of assembly, homodimer. Mg(2+) serves as cofactor.

May be involved in sulfur metabolism and oxidative stress response. Does not show RuBisCO activity. This Rhodopseudomonas palustris (strain ATCC BAA-98 / CGA009) protein is Ribulose bisphosphate carboxylase-like protein 2 (rlp2).